The chain runs to 209 residues: MFVTFEGVEGSGKSTQMTRLCAALEAAGRTVCRTRQPGGCFLGQTLRAILLSQKTAGLDDRAELFLYLADRAQHVAEVIRPALAAGQVVVCDRYTDSTVAYQGYGRGLDTTLLQNLNAVAAAGVVPDLTVLLDLDPAIGLTRATSRNAAAGTAEAEGRFEAERLEFHQRVRAGYRALAAAEPARFAVIDAAPSPDAVAEAVWGVVGKLL.

7–14 (GVEGSGKS) contacts ATP.

This sequence belongs to the thymidylate kinase family.

It carries out the reaction dTMP + ATP = dTDP + ADP. Phosphorylation of dTMP to form dTDP in both de novo and salvage pathways of dTTP synthesis. The protein is Thymidylate kinase of Solidesulfovibrio magneticus (strain ATCC 700980 / DSM 13731 / RS-1) (Desulfovibrio magneticus).